The primary structure comprises 638 residues: Zinc finger protein 143 (638 aa).

Met-1 carries the N-acetylmethionine modification. A Glycyl lysine isopeptide (Lys-Gly) (interchain with G-Cter in SUMO2) cross-link involves residue Lys-213. 4 C2H2-type zinc fingers span residues 237–261 (FRCE…ERSH), 267–291 (YQCE…VRTH), 297–321 (YRCS…IRTH), and 327–351 (FKCP…VRTH). Thr-352 carries the post-translational modification Phosphothreonine. 3 C2H2-type zinc fingers span residues 357 to 381 (YYCT…VRIH), 387 to 411 (YVCT…HVVH), and 417 to 440 (YNCN…RTAH). Lys-406 participates in a covalent cross-link: Glycyl lysine isopeptide (Lys-Gly) (interchain with G-Cter in SUMO2).

Belongs to the GLI C2H2-type zinc-finger protein family. In terms of assembly, interacts with CHD8. Forms a complex with HCFC1 and ZNF143. Expressed in all tissues tested, with the strongest expression in ovary.

It localises to the nucleus. In terms of biological role, transcriptional activator. Activates the gene for selenocysteine tRNA (tRNAsec). Binds to the SPH motif of small nuclear RNA (snRNA) gene promoters. Participates in efficient U6 RNA polymerase III transcription via its interaction with CHD8. In complex with HCFC1 and ZNF143, regulates the expression of several genes, including AP2S1, ESCO2, OPHN1, RBL1, UBXN8 and ZNF32. The chain is Zinc finger protein 143 (ZNF143) from Homo sapiens (Human).